The primary structure comprises 1037 residues: Caspase recruitment domain-containing protein 6 (1037 aa).

Ala2 bears the N-acetylalanine mark. In terms of domain architecture, CARD spans 3–94 (TESTPSEIIE…QSAAICGLRH (92 aa)). Ser154 carries the post-translational modification Phosphoserine. Disordered regions lie at residues 235-270 (DPEH…TSLS), 669-704 (VSSG…PIQE), and 887-1037 (RTSH…GGKH). Positions 242–261 (DGEEDFENSETTEFSGEEPS) are enriched in acidic residues. Positions 690–699 (LKSSSKSQAL) are enriched in low complexity. 3 stretches are compositionally biased toward polar residues: residues 911–928 (ASQQ…SNPA), 938–954 (KSSQ…TVKH), and 963–984 (VPSQ…QTKP). Residue Ser985 is modified to Phosphoserine. Residues 994 to 1012 (PSQPWPPQSKPSQPRPPQP) are compositionally biased toward pro residues. The span at 1023 to 1037 (KAHHSKAGQKRGGKH) shows a compositional bias: basic residues.

May be involved in apoptosis. The polypeptide is Caspase recruitment domain-containing protein 6 (CARD6) (Homo sapiens (Human)).